The primary structure comprises 214 residues: Thymidylate kinase (214 aa).

10 to 17 provides a ligand contact to ATP; sequence GGEGVGKT.

It belongs to the thymidylate kinase family.

The enzyme catalyses dTMP + ATP = dTDP + ADP. Phosphorylation of dTMP to form dTDP in both de novo and salvage pathways of dTTP synthesis. This is Thymidylate kinase from Bartonella quintana (strain Toulouse) (Rochalimaea quintana).